The following is a 388-amino-acid chain: Coproporphyrin III ferrochelatase (388 aa).

Residues Ser-59 and Tyr-124 each contribute to the Fe-coproporphyrin III site. Residues His-186 and Glu-276 each contribute to the Fe(2+) site. The tract at residues 349 to 369 is disordered; that stretch reads QSPQHASRAVTDAAATGRRGD.

Belongs to the ferrochelatase family.

The protein localises to the cytoplasm. The enzyme catalyses Fe-coproporphyrin III + 2 H(+) = coproporphyrin III + Fe(2+). It functions in the pathway porphyrin-containing compound metabolism; protoheme biosynthesis. Involved in coproporphyrin-dependent heme b biosynthesis. Catalyzes the insertion of ferrous iron into coproporphyrin III to form Fe-coproporphyrin III. The polypeptide is Coproporphyrin III ferrochelatase (Frankia alni (strain DSM 45986 / CECT 9034 / ACN14a)).